The primary structure comprises 291 residues: Nucleotide-binding protein lhv_0732 (291 aa).

13–20 (GMSGAGKT) is a binding site for ATP. 61–64 (DLRV) is a binding site for GTP.

Belongs to the RapZ-like family.

Displays ATPase and GTPase activities. The chain is Nucleotide-binding protein lhv_0732 from Lactobacillus helveticus (strain DPC 4571).